The following is a 261-amino-acid chain: Taurine import ATP-binding protein TauB (261 aa).

Positions 4–233 (LQLERIGAQY…RYAAGESARA (230 aa)) constitute an ABC transporter domain. ATP is bound at residue 38-45 (GPSGSGKT).

The protein belongs to the ABC transporter superfamily. Taurine importer (TC 3.A.1.17.1) family. As to quaternary structure, the complex is composed of two ATP-binding proteins (TauB), two transmembrane proteins (TauC) and a solute-binding protein (TauA).

It localises to the cell inner membrane. It carries out the reaction taurine(out) + ATP + H2O = taurine(in) + ADP + phosphate + H(+). Its function is as follows. Part of the ABC transporter complex TauABC involved in taurine import. Responsible for energy coupling to the transport system. The polypeptide is Taurine import ATP-binding protein TauB (Pseudomonas savastanoi pv. phaseolicola (strain 1448A / Race 6) (Pseudomonas syringae pv. phaseolicola (strain 1448A / Race 6))).